Consider the following 607-residue polypeptide: Translation initiation factor IF-2 (607 aa).

Residues 54-93 (SAPQAQDSTPVAETPAAAQPAAPQAASSQPAAAQAAQAVA) form a disordered region. Residues 62-93 (TPVAETPAAAQPAAPQAASSQPAAAQAAQAVA) are compositionally biased toward low complexity. A tr-type G domain is found at 108–281 (HRAPVVTIMG…ELEDLRADPK (174 aa)). A G1 region spans residues 117-124 (GHVDHGKT). A GTP-binding site is contributed by 117–124 (GHVDHGKT). Residues 142 to 146 (GITQH) are G2. A G3 region spans residues 163-166 (DTPG). GTP-binding positions include 163-167 (DTPGH) and 217-220 (NKVD). A G4 region spans residues 217–220 (NKVD). The G5 stretch occupies residues 253 to 255 (SAK).

The protein belongs to the TRAFAC class translation factor GTPase superfamily. Classic translation factor GTPase family. IF-2 subfamily.

It localises to the cytoplasm. Functionally, one of the essential components for the initiation of protein synthesis. Protects formylmethionyl-tRNA from spontaneous hydrolysis and promotes its binding to the 30S ribosomal subunits. Also involved in the hydrolysis of GTP during the formation of the 70S ribosomal complex. This Deinococcus deserti (strain DSM 17065 / CIP 109153 / LMG 22923 / VCD115) protein is Translation initiation factor IF-2.